A 286-amino-acid chain; its full sequence is Glucose import system permease protein GlcT (286 aa).

6 consecutive transmembrane segments (helical) span residues 6-26, 71-91, 103-123, 154-174, 199-219, and 260-280; these read TIIL…LVIW, VILV…LYFL, IVIY…LWLF, LVLV…LAGF, ILIP…FLFS, and VATM…LTVI. Positions 63–275 constitute an ABC transmembrane type-1 domain; that stretch reads LLHSIELSVI…LIATIIIIPY (213 aa).

The protein belongs to the binding-protein-dependent transport system permease family. As to quaternary structure, the complex is composed of two ATP-binding proteins (GlcV), two transmembrane proteins (GlcT and GlcU) and a solute-binding protein (GlcS).

It localises to the cell membrane. In terms of biological role, part of the ABC transporter complex GlcSTUV involved in glucose uptake. Responsible for the translocation of the substrate across the membrane. This is Glucose import system permease protein GlcT from Saccharolobus solfataricus (strain ATCC 35092 / DSM 1617 / JCM 11322 / P2) (Sulfolobus solfataricus).